The primary structure comprises 405 residues: Tryptophan synthase beta chain (405 aa).

Lysine 96 bears the N6-(pyridoxal phosphate)lysine mark.

Belongs to the TrpB family. As to quaternary structure, tetramer of two alpha and two beta chains. Pyridoxal 5'-phosphate serves as cofactor.

The catalysed reaction is (1S,2R)-1-C-(indol-3-yl)glycerol 3-phosphate + L-serine = D-glyceraldehyde 3-phosphate + L-tryptophan + H2O. Its pathway is amino-acid biosynthesis; L-tryptophan biosynthesis; L-tryptophan from chorismate: step 5/5. Its function is as follows. The beta subunit is responsible for the synthesis of L-tryptophan from indole and L-serine. This chain is Tryptophan synthase beta chain, found in Clostridium botulinum (strain Alaska E43 / Type E3).